The primary structure comprises 458 residues: NADH-quinone oxidoreductase subunit N 1 (458 aa).

The next 14 membrane-spanning stretches (helical) occupy residues 12-32 (ALIPEITLTGFASLILLAGLL), 37-57 (EVLVWSSVLFLVIFAFFIPSF), 70-90 (FLTIYLKLIIIIGTIISLLVL), 101-121 (FNESIAFILFSALGMMLLVSA), 124-144 (LISFFLSFELMSLSIYVLVGI), 159-179 (FMLGGFSSAIMLFGIAFIYGA), 199-219 (ILIGLGLFIVGLCFKIALVPF), 230-250 (APTPVTAFISTLPKVAILGAF), 266-286 (SNFLIVLSIATMATGNFFALI), 293-313 (MLAYSSIAHAGYIIIGVIVGT), 321-341 (VAYMFIYTLMNIGAFAMVIAF), 361-381 (IAMLIFMFSLTGVPPTAGFIV), 393-413 (GFTWLVVIAVIFTVISAYYYL), and 438-458 (VAILICTIGVTFLGILPLFLI).

This sequence belongs to the complex I subunit 2 family. In terms of assembly, NDH-1 is composed of 14 different subunits. Subunits NuoA, H, J, K, L, M, N constitute the membrane sector of the complex.

It localises to the cell inner membrane. It catalyses the reaction a quinone + NADH + 5 H(+)(in) = a quinol + NAD(+) + 4 H(+)(out). Its function is as follows. NDH-1 shuttles electrons from NADH, via FMN and iron-sulfur (Fe-S) centers, to quinones in the respiratory chain. The immediate electron acceptor for the enzyme in this species is believed to be ubiquinone. Couples the redox reaction to proton translocation (for every two electrons transferred, four hydrogen ions are translocated across the cytoplasmic membrane), and thus conserves the redox energy in a proton gradient. This chain is NADH-quinone oxidoreductase subunit N 1, found in Thermodesulfovibrio yellowstonii (strain ATCC 51303 / DSM 11347 / YP87).